A 209-amino-acid chain; its full sequence is Large ribosomal subunit protein eL13 (209 aa).

This sequence belongs to the eukaryotic ribosomal protein eL13 family. As to quaternary structure, component of the 60S large ribosomal subunit (LSU).

The protein resides in the cytoplasm. Component of the ribosome, a large ribonucleoprotein complex responsible for the synthesis of proteins in the cell. The small ribosomal subunit (SSU) binds messenger RNAs (mRNAs) and translates the encoded message by selecting cognate aminoacyl-transfer RNA (tRNA) molecules. The large subunit (LSU) contains the ribosomal catalytic site termed the peptidyl transferase center (PTC), which catalyzes the formation of peptide bonds, thereby polymerizing the amino acids delivered by tRNAs into a polypeptide chain. The nascent polypeptides leave the ribosome through a tunnel in the LSU and interact with protein factors that function in enzymatic processing, targeting, and the membrane insertion of nascent chains at the exit of the ribosomal tunnel. As part of the LSU, it is probably required for its formation and the maturation of rRNAs. This chain is Large ribosomal subunit protein eL13 (rpl13), found in Dictyostelium discoideum (Social amoeba).